The chain runs to 128 residues: DNA-directed RNA polymerase subunit omega (128 aa).

It belongs to the RNA polymerase subunit omega family. As to quaternary structure, the RNAP catalytic core consists of 2 alpha, 1 beta, 1 beta' and 1 omega subunit. When a sigma factor is associated with the core the holoenzyme is formed, which can initiate transcription.

The catalysed reaction is RNA(n) + a ribonucleoside 5'-triphosphate = RNA(n+1) + diphosphate. Functionally, promotes RNA polymerase assembly. Latches the N- and C-terminal regions of the beta' subunit thereby facilitating its interaction with the beta and alpha subunits. The sequence is that of DNA-directed RNA polymerase subunit omega from Azorhizobium caulinodans (strain ATCC 43989 / DSM 5975 / JCM 20966 / LMG 6465 / NBRC 14845 / NCIMB 13405 / ORS 571).